Here is a 439-residue protein sequence, read N- to C-terminus: Xylose isomerase (439 aa).

Residues histidine 103 and aspartate 106 contribute to the active site. Positions 234, 270, 273, 298, 309, 311, and 341 each coordinate Mg(2+).

It belongs to the xylose isomerase family. In terms of assembly, homotetramer. Mg(2+) is required as a cofactor.

The protein resides in the cytoplasm. It carries out the reaction alpha-D-xylose = alpha-D-xylulofuranose. The sequence is that of Xylose isomerase from Bacteroides fragilis (strain YCH46).